Consider the following 187-residue polypeptide: Threonylcarbamoyl-AMP synthase (187 aa).

The YrdC-like domain maps to 4-187 (TLDLDRAVAT…DARSGQILRD (184 aa)).

It belongs to the SUA5 family. TsaC subfamily.

It localises to the cytoplasm. It catalyses the reaction L-threonine + hydrogencarbonate + ATP = L-threonylcarbamoyladenylate + diphosphate + H2O. Its function is as follows. Required for the formation of a threonylcarbamoyl group on adenosine at position 37 (t(6)A37) in tRNAs that read codons beginning with adenine. Catalyzes the conversion of L-threonine, HCO(3)(-)/CO(2) and ATP to give threonylcarbamoyl-AMP (TC-AMP) as the acyladenylate intermediate, with the release of diphosphate. This chain is Threonylcarbamoyl-AMP synthase, found in Xanthomonas euvesicatoria pv. vesicatoria (strain 85-10) (Xanthomonas campestris pv. vesicatoria).